A 114-amino-acid polypeptide reads, in one-letter code: Ribonuclease P protein component (114 aa).

Belongs to the RnpA family. As to quaternary structure, consists of a catalytic RNA component (M1 or rnpB) and a protein subunit.

The enzyme catalyses Endonucleolytic cleavage of RNA, removing 5'-extranucleotides from tRNA precursor.. RNaseP catalyzes the removal of the 5'-leader sequence from pre-tRNA to produce the mature 5'-terminus. It can also cleave other RNA substrates such as 4.5S RNA. The protein component plays an auxiliary but essential role in vivo by binding to the 5'-leader sequence and broadening the substrate specificity of the ribozyme. The chain is Ribonuclease P protein component from Legionella pneumophila (strain Lens).